Consider the following 334-residue polypeptide: Holliday junction branch migration complex subunit RuvB (334 aa).

The large ATPase domain (RuvB-L) stretch occupies residues M1–Y182. ATP-binding positions include L21, R22, G63, K66, T67, T68, E129–F131, R172, Y182, and R219. T67 serves as a coordination point for Mg(2+). The tract at residues N183 to Q253 is small ATPAse domain (RuvB-S). The segment at Q256 to E334 is head domain (RuvB-H). 3 residues coordinate DNA: R292, R311, and R316.

It belongs to the RuvB family. In terms of assembly, homohexamer. Forms an RuvA(8)-RuvB(12)-Holliday junction (HJ) complex. HJ DNA is sandwiched between 2 RuvA tetramers; dsDNA enters through RuvA and exits via RuvB. An RuvB hexamer assembles on each DNA strand where it exits the tetramer. Each RuvB hexamer is contacted by two RuvA subunits (via domain III) on 2 adjacent RuvB subunits; this complex drives branch migration. In the full resolvosome a probable DNA-RuvA(4)-RuvB(12)-RuvC(2) complex forms which resolves the HJ.

It is found in the cytoplasm. It carries out the reaction ATP + H2O = ADP + phosphate + H(+). The RuvA-RuvB-RuvC complex processes Holliday junction (HJ) DNA during genetic recombination and DNA repair, while the RuvA-RuvB complex plays an important role in the rescue of blocked DNA replication forks via replication fork reversal (RFR). RuvA specifically binds to HJ cruciform DNA, conferring on it an open structure. The RuvB hexamer acts as an ATP-dependent pump, pulling dsDNA into and through the RuvAB complex. RuvB forms 2 homohexamers on either side of HJ DNA bound by 1 or 2 RuvA tetramers; 4 subunits per hexamer contact DNA at a time. Coordinated motions by a converter formed by DNA-disengaged RuvB subunits stimulates ATP hydrolysis and nucleotide exchange. Immobilization of the converter enables RuvB to convert the ATP-contained energy into a lever motion, pulling 2 nucleotides of DNA out of the RuvA tetramer per ATP hydrolyzed, thus driving DNA branch migration. The RuvB motors rotate together with the DNA substrate, which together with the progressing nucleotide cycle form the mechanistic basis for DNA recombination by continuous HJ branch migration. Branch migration allows RuvC to scan DNA until it finds its consensus sequence, where it cleaves and resolves cruciform DNA. In Staphylococcus aureus (strain MRSA252), this protein is Holliday junction branch migration complex subunit RuvB.